We begin with the raw amino-acid sequence, 270 residues long: Extracellular metalloprotease MCYG_04966 (270 aa).

An N-terminal signal peptide occupies residues 1 to 19 (MRLSLFLSGLAAAGSIVSA). N-linked (GlcNAc...) asparagine glycosylation occurs at Asn135. Zn(2+) is bound at residue His184. Residue Glu185 is part of the active site. His188 serves as a coordination point for Zn(2+). An N-linked (GlcNAc...) asparagine glycan is attached at Asn199. The disordered stretch occupies residues 208 to 227 (VADTPPQSKKTSGCPNSQDS). Over residues 212–227 (PPQSKKTSGCPNSQDS) the composition is skewed to polar residues. A disulfide bridge connects residues Cys221 and Cys247.

The protein belongs to the peptidase M43B family.

The protein localises to the secreted. Functionally, secreted metalloproteinase that allows assimilation of proteinaceous substrates. Plays a pivotal role as a pathogenicity determinant during infections and contributes to the ability of the pathogen to persist within the mammalian host. The polypeptide is Extracellular metalloprotease MCYG_04966 (Arthroderma otae (strain ATCC MYA-4605 / CBS 113480) (Microsporum canis)).